Here is a 535-residue protein sequence, read N- to C-terminus: Dual specificity calcium/calmodulin-dependent 3',5'-cyclic nucleotide phosphodiesterase 1B (535 aa).

The segment at 1 to 21 (MELSPRSPPEMLESDCPSPLE) is disordered. 2 positions are modified to phosphoserine: Ser-7 and Ser-14. Calmodulin-binding stretches follow at residues 27–47 (SKKM…QLEN) and 117–140 (EKPK…MFRR). Positions 145–502 (VGPTYSTAVH…QKWKERAASG (358 aa)) constitute a PDEase domain. His-222 (proton donor) is an active-site residue. Zn(2+)-binding residues include His-226, His-262, Asp-263, and Asp-369. Asp-263 contributes to the Mg(2+) binding site. 2 disordered regions span residues 445-474 (PLTD…GDPN) and 495-535 (WKER…GNLD). Residues 454 to 463 (KSQPSFQWRQ) show a composition bias toward polar residues. Phosphoserine is present on residues Ser-465 and Ser-513.

The protein belongs to the cyclic nucleotide phosphodiesterase family. PDE1 subfamily. As to quaternary structure, homodimer. Zn(2+) is required as a cofactor. The cofactor is Mg(2+). As to expression, expressed in brain.

The protein localises to the cytoplasm. It is found in the cytosol. It carries out the reaction a nucleoside 3',5'-cyclic phosphate + H2O = a nucleoside 5'-phosphate + H(+). It catalyses the reaction 3',5'-cyclic GMP + H2O = GMP + H(+). The enzyme catalyses 3',5'-cyclic AMP + H2O = AMP + H(+). With respect to regulation, type I PDE are activated by the binding of calmodulin in the presence of Ca(2+). In terms of biological role, cyclic nucleotide phosphodiesterase with a dual specificity for the second messengers cAMP and cGMP, which are key regulators of many important physiological processes. Has a preference for cGMP as a substrate. The protein is Dual specificity calcium/calmodulin-dependent 3',5'-cyclic nucleotide phosphodiesterase 1B of Rattus norvegicus (Rat).